The chain runs to 199 residues: Single-stranded DNA-binding protein 2 (199 aa).

An SSB domain is found at methionine 1 to leucine 110. The tract at residues threonine 114–phenylalanine 199 is disordered. Gly residues predominate over residues glutamine 123–alanine 156. Over residues proline 157–glycine 166 the composition is skewed to low complexity. Residues alanine 167–tyrosine 193 show a composition bias toward gly residues.

Homotetramer. Phosphorylated on tyrosine residue(s) when expressed in E.coli.

The protein localises to the cytoplasm. It localises to the nucleoid. The protein is Single-stranded DNA-binding protein 2 (ssb2) of Streptomyces coelicolor (strain ATCC BAA-471 / A3(2) / M145).